Reading from the N-terminus, the 340-residue chain is Beta-hexosaminidase (340 aa).

Residues Asp-60, Arg-68, Arg-127, and 157–158 contribute to the substrate site; that span reads KH. The active-site Proton donor/acceptor is His-170. Catalysis depends on Asp-242, which acts as the Nucleophile.

It belongs to the glycosyl hydrolase 3 family. NagZ subfamily.

It is found in the cytoplasm. It carries out the reaction Hydrolysis of terminal non-reducing N-acetyl-D-hexosamine residues in N-acetyl-beta-D-hexosaminides.. It participates in cell wall biogenesis; peptidoglycan recycling. In terms of biological role, plays a role in peptidoglycan recycling by cleaving the terminal beta-1,4-linked N-acetylglucosamine (GlcNAc) from peptide-linked peptidoglycan fragments, giving rise to free GlcNAc, anhydro-N-acetylmuramic acid and anhydro-N-acetylmuramic acid-linked peptides. The chain is Beta-hexosaminidase from Glaesserella parasuis serovar 5 (strain SH0165) (Haemophilus parasuis).